A 315-amino-acid polypeptide reads, in one-letter code: Olfactory receptor 3A1 (315 aa).

The Extracellular segment spans residues 1 to 28 (MQPESGANGTVIAEFILLGLLEAPGLQP). N-linked (GlcNAc...) asparagine glycosylation occurs at N8. Residues 29 to 52 (VVFVLFLFAYLVTVGGNLSILAAV) form a helical membrane-spanning segment. Over 53-60 (LVEPELHT) the chain is Cytoplasmic. Residues 61–82 (PMYFFLGNLSVLDVGCISVTVP) traverse the membrane as a helical segment. Over 83–103 (SMLSRLLSRKRAVPCGACLTQ) the chain is Extracellular. A disulfide bond links C100 and C192. A helical transmembrane segment spans residues 104–123 (LFFFHLFVGVDCFLLIAMAY). The Cytoplasmic portion of the chain corresponds to 124–143 (DRFLAICRPLTYSTRMSQTV). The helical transmembrane segment at 144 to 161 (QRMLVAASWACAFTNALT) threads the bilayer. Residues 162 to 199 (HTVAMSTLNFCGPNVINHFYCDLPQLCQLSCSSTQLSE) lie on the Extracellular side of the membrane. The helical transmembrane segment at 200 to 223 (LLLFAVGFIMAGTSMALIVISYIH) threads the bilayer. Over 224-240 (VAAAVLRIRSVEGRKKA) the chain is Cytoplasmic. The chain crosses the membrane as a helical span at residues 241 to 264 (FSTCGSHLTVVAIFYGSGIFNYMR). The Extracellular segment spans residues 265-275 (LGSTKLSDKDK). A helical transmembrane segment spans residues 276–295 (AVGIFNTVINPMLNPIIYSF). Over 296–315 (RNPDVQSAIWRMLTGRRSLA) the chain is Cytoplasmic.

Belongs to the G-protein coupled receptor 1 family.

It is found in the cell membrane. Functionally, odorant receptor. In Gorilla gorilla gorilla (Western lowland gorilla), this protein is Olfactory receptor 3A1 (OR3A1).